Consider the following 51-residue polypeptide: Perinerin (51 aa).

In terms of biological role, antibacterial activity against both Gram-negative and Gram-positive bacteria. Shows marked activity against P.aeruginosa, B.megaterium, A.viridans, moderate activity against E.coli K-12, S.aureus and M.luteus, and minor activity against P.vulgaris. Antifungal activity against P.heliothis. The polypeptide is Perinerin (Perinereis aibuhitensis (Korean lugworm)).